The following is a 1867-amino-acid chain: TATA-binding protein-associated factor MOT1 (1867 aa).

Serine 93 is modified (phosphoserine). The interval 169–228 (KTDDIKQETSMLNASDKANENKSNANKKSARMLAMARRKKKMSAKNTPKHPVDITESSVS) is disordered. The span at 181–203 (NASDKANENKSNANKKSARMLAM) shows a compositional bias: low complexity. Residues 195–211 (KKSARMLAMARRKKKMS) carry the Nuclear localization signal motif. 3 HEAT repeats span residues 289 to 326 (WQFQ…KHAY), 445 to 482 (GLLE…EFVK), and 541 to 578 (WSFK…IKDD). Serine 677 is subject to Phosphoserine. 2 HEAT repeats span residues 1108–1145 (SEVF…ISSV) and 1188–1225 (PYVI…LVPL). In terms of domain architecture, Helicase ATP-binding spans 1284 to 1457 (AFLNKYHLHG…WSLFDFLMPG (174 aa)). 1297–1304 (DDMGLGKT) lines the ATP pocket. The short motif at 1408 to 1411 (DEGH) is the DEGH box element. The stretch at 1495 to 1537 (ALHKQVLPFMLRRLKEDVLSDLPPKIIQDYYCELGDLQKQLYM) is one HEAT 6 repeat. One can recognise a Helicase C-terminal domain in the interval 1639–1787 (PIQNVISQHR…STVVNQQNSG (149 aa)). A disordered region spans residues 1802-1822 (PDNVTSQDNEEKNNGDSQAAK).

Belongs to the SNF2/RAD54 helicase family. As to quaternary structure, forms a complex with TBP which binds TATA DNA with high affinity but with altered specificity.

It localises to the mitochondrion. The protein localises to the nucleus. In terms of biological role, regulates transcription in association with TATA binding protein (TBP). Removes TBP from the TATA box via its C-terminal ATPase activity. Both transcription activation and repression require its ATPase activity. The protein is TATA-binding protein-associated factor MOT1 (MOT1) of Saccharomyces cerevisiae (strain ATCC 204508 / S288c) (Baker's yeast).